A 688-amino-acid polypeptide reads, in one-letter code: Glycine--tRNA ligase beta subunit (688 aa).

Belongs to the class-II aminoacyl-tRNA synthetase family. In terms of assembly, tetramer of two alpha and two beta subunits.

It localises to the cytoplasm. The enzyme catalyses tRNA(Gly) + glycine + ATP = glycyl-tRNA(Gly) + AMP + diphosphate. This is Glycine--tRNA ligase beta subunit from Listeria monocytogenes serotype 4a (strain HCC23).